A 260-amino-acid polypeptide reads, in one-letter code: MADS-box transcription factor 29 (260 aa).

In terms of domain architecture, MADS-box spans 1-61 (MGRGKIEIKR…GKMFEYCSPT (61 aa)). A K-box domain is found at 85-175 (DQQIFVEMTR…CRMINENHHQ (91 aa)).

As to expression, expressed in developing seeds.

Its subcellular location is the nucleus. Its function is as follows. Probable transcription factor. The protein is MADS-box transcription factor 29 (MADS29) of Oryza sativa subsp. japonica (Rice).